A 195-amino-acid chain; its full sequence is FMN-dependent NADH:quinone oxidoreductase 2 (195 aa).

Residues 16-18 and 85-88 contribute to the FMN site; these read SVS and MWNL.

Belongs to the azoreductase type 1 family. In terms of assembly, homodimer. It depends on FMN as a cofactor.

It catalyses the reaction 2 a quinone + NADH + H(+) = 2 a 1,4-benzosemiquinone + NAD(+). The catalysed reaction is N,N-dimethyl-1,4-phenylenediamine + anthranilate + 2 NAD(+) = 2-(4-dimethylaminophenyl)diazenylbenzoate + 2 NADH + 2 H(+). Its function is as follows. Quinone reductase that provides resistance to thiol-specific stress caused by electrophilic quinones. Functionally, also exhibits azoreductase activity. Catalyzes the reductive cleavage of the azo bond in aromatic azo compounds to the corresponding amines. This chain is FMN-dependent NADH:quinone oxidoreductase 2, found in Photobacterium profundum (strain SS9).